We begin with the raw amino-acid sequence, 313 residues long: Aspartate carbamoyltransferase catalytic subunit (313 aa).

Positions 55 and 56 each coordinate carbamoyl phosphate. Residue Lys83 participates in L-aspartate binding. Carbamoyl phosphate-binding residues include Arg105, His138, and Gln141. Residues Arg171 and Arg225 each contribute to the L-aspartate site. Carbamoyl phosphate-binding residues include Gly266 and Pro267.

It belongs to the aspartate/ornithine carbamoyltransferase superfamily. ATCase family. As to quaternary structure, heterododecamer (2C3:3R2) of six catalytic PyrB chains organized as two trimers (C3), and six regulatory PyrI chains organized as three dimers (R2).

The enzyme catalyses carbamoyl phosphate + L-aspartate = N-carbamoyl-L-aspartate + phosphate + H(+). Its pathway is pyrimidine metabolism; UMP biosynthesis via de novo pathway; (S)-dihydroorotate from bicarbonate: step 2/3. Functionally, catalyzes the condensation of carbamoyl phosphate and aspartate to form carbamoyl aspartate and inorganic phosphate, the committed step in the de novo pyrimidine nucleotide biosynthesis pathway. The sequence is that of Aspartate carbamoyltransferase catalytic subunit from Corynebacterium diphtheriae (strain ATCC 700971 / NCTC 13129 / Biotype gravis).